The primary structure comprises 246 residues: Pyridoxine 5'-phosphate synthase (246 aa).

N12 contributes to the 3-amino-2-oxopropyl phosphate binding site. 14-15 (DH) contacts 1-deoxy-D-xylulose 5-phosphate. R23 is a 3-amino-2-oxopropyl phosphate binding site. Residue H48 is the Proton acceptor of the active site. Residues R50 and H55 each coordinate 1-deoxy-D-xylulose 5-phosphate. E75 (proton acceptor) is an active-site residue. 1-deoxy-D-xylulose 5-phosphate is bound at residue T105. The Proton donor role is filled by H196. 3-amino-2-oxopropyl phosphate contacts are provided by residues G197 and 218–219 (GH).

This sequence belongs to the PNP synthase family. In terms of assembly, homooctamer; tetramer of dimers.

Its subcellular location is the cytoplasm. The enzyme catalyses 3-amino-2-oxopropyl phosphate + 1-deoxy-D-xylulose 5-phosphate = pyridoxine 5'-phosphate + phosphate + 2 H2O + H(+). It functions in the pathway cofactor biosynthesis; pyridoxine 5'-phosphate biosynthesis; pyridoxine 5'-phosphate from D-erythrose 4-phosphate: step 5/5. Its function is as follows. Catalyzes the complicated ring closure reaction between the two acyclic compounds 1-deoxy-D-xylulose-5-phosphate (DXP) and 3-amino-2-oxopropyl phosphate (1-amino-acetone-3-phosphate or AAP) to form pyridoxine 5'-phosphate (PNP) and inorganic phosphate. The sequence is that of Pyridoxine 5'-phosphate synthase from Pseudomonas syringae pv. syringae (strain B728a).